We begin with the raw amino-acid sequence, 356 residues long: MAAEGWIWRWGWGRRCLGRPGLPGPGPGPATPLFLLLLLGPVVADITDGNSEHLKREHSLIKPYQGVGSSSMPLWDFQGSTILTSQYVRLTPDERSKEGSIWNHQPCFLKDWEMHVHFKVHGTGKKNLHGDGIALWYTRDRLVPGPVFGSKDNFHGLAIFLDTYPNDETTERVFPYISVMVNNGSLSYDHSKDGRWTELAGCTADFRNRDHDTFLAVRYSRGRLTVMTDLEDKNEWKNCIDITGVRLPTGYYFGASAGTGDLSDNHDIISMKLFQLMVEHTPDEENIDWTKIEPSVNFLKSPKDNVDDPTGNFRSGPLTGWRVFLLLLCALLGIIVCAVVGAVVFQKRQERNKRFY.

The first 44 residues, 1–44 (MAAEGWIWRWGWGRRCLGRPGLPGPGPGPATPLFLLLLLGPVVA), serve as a signal peptide directing secretion. Over 45-322 (DITDGNSEHL…FRSGPLTGWR (278 aa)) the chain is Lumenal. Residues 52–276 (EHLKREHSLI…DIISMKLFQL (225 aa)) form the L-type lectin-like domain. Serine 96 and aspartate 131 together coordinate a carbohydrate. Ca(2+) contacts are provided by aspartate 162, tyrosine 164, and asparagine 166. A carbohydrate is bound at residue 164–166 (YPN). Asparagine 183 carries an N-linked (GlcNAc...) asparagine glycan. Position 190 (histidine 190) interacts with a carbohydrate. Aspartate 193 serves as a coordination point for Ca(2+). A disulfide bridge connects residues cysteine 202 and cysteine 239. Position 260–262 (260–262 (GDL)) interacts with a carbohydrate. The helical transmembrane segment at 323-345 (VFLLLLCALLGIIVCAVVGAVVF) threads the bilayer. The Cytoplasmic segment spans residues 346–356 (QKRQERNKRFY).

As to quaternary structure, monomer. Ca(2+) is required as a cofactor. Expressed in kidney, liver, intestine, lung, spleen and heart. Low expression in brain.

The protein resides in the golgi apparatus membrane. In terms of biological role, plays a role as an intracellular lectin in the early secretory pathway. Interacts with N-acetyl-D-galactosamine and high-mannose type glycans and may also bind to O-linked glycans. Involved in the transport and sorting of glycoproteins carrying high mannose-type glycans. This chain is Vesicular integral-membrane protein VIP36 (LMAN2), found in Canis lupus familiaris (Dog).